Here is a 77-residue protein sequence, read N- to C-terminus: uncharacterized protein (77 aa).

Polar residues predominate over residues Met1–Lys15. Disordered stretches follow at residues Met1 to Trp20 and Thr31 to Phe52. The span at Ser33–Asp44 shows a compositional bias: acidic residues.

This is an uncharacterized protein from Schizosaccharomyces pombe (strain 972 / ATCC 24843) (Fission yeast).